A 184-amino-acid polypeptide reads, in one-letter code: RNA 2',3'-cyclic phosphodiesterase (184 aa).

His-40 serves as the catalytic Proton donor. Short sequence motifs (HXTX) lie at residues His-40–Leu-43 and His-125–Leu-128. The active-site Proton acceptor is the His-125.

This sequence belongs to the 2H phosphoesterase superfamily. ThpR family.

The enzyme catalyses a 3'-end 2',3'-cyclophospho-ribonucleotide-RNA + H2O = a 3'-end 2'-phospho-ribonucleotide-RNA + H(+). Its function is as follows. Hydrolyzes RNA 2',3'-cyclic phosphodiester to an RNA 2'-phosphomonoester. In vitro, ligates 5' and 3' half-tRNA molecules with 2',3'-cyclic phosphate and 5'-hydroxyl termini, respectively, to the product containing the 2'-5' phosphodiester linkage. Ligase activity requires GTP, but GTP hydrolysis is not required for the reaction, which is reversible. Ligase activity is weak compared to the phosphodiesterase activity. This is RNA 2',3'-cyclic phosphodiesterase from Pyrococcus furiosus (strain ATCC 43587 / DSM 3638 / JCM 8422 / Vc1).